The primary structure comprises 441 residues: UDP-N-acetylglucosamine--N-acetylmuramyl-(pentapeptide) pyrophosphoryl-undecaprenol N-acetylglucosamine transferase (441 aa).

UDP-N-acetyl-alpha-D-glucosamine is bound by residues Thr-28 to Gly-30, Asn-140, Arg-176, Ser-204, Ile-257, and Gln-302.

This sequence belongs to the glycosyltransferase 28 family. MurG subfamily.

The protein resides in the cell inner membrane. The catalysed reaction is di-trans,octa-cis-undecaprenyl diphospho-N-acetyl-alpha-D-muramoyl-L-alanyl-D-glutamyl-meso-2,6-diaminopimeloyl-D-alanyl-D-alanine + UDP-N-acetyl-alpha-D-glucosamine = di-trans,octa-cis-undecaprenyl diphospho-[N-acetyl-alpha-D-glucosaminyl-(1-&gt;4)]-N-acetyl-alpha-D-muramoyl-L-alanyl-D-glutamyl-meso-2,6-diaminopimeloyl-D-alanyl-D-alanine + UDP + H(+). It participates in cell wall biogenesis; peptidoglycan biosynthesis. Functionally, cell wall formation. Catalyzes the transfer of a GlcNAc subunit on undecaprenyl-pyrophosphoryl-MurNAc-pentapeptide (lipid intermediate I) to form undecaprenyl-pyrophosphoryl-MurNAc-(pentapeptide)GlcNAc (lipid intermediate II). The polypeptide is UDP-N-acetylglucosamine--N-acetylmuramyl-(pentapeptide) pyrophosphoryl-undecaprenol N-acetylglucosamine transferase (Xanthomonas oryzae pv. oryzae (strain MAFF 311018)).